The sequence spans 169 residues: Phosphopantetheine adenylyltransferase (169 aa).

Ser10 is a substrate binding site. Residues Ser10–Phe11 and His18 each bind ATP. Substrate contacts are provided by Lys42, Thr79, and Arg93. Residues Gly94–Arg96, Glu104, and Val129–Thr135 contribute to the ATP site.

It belongs to the bacterial CoaD family. As to quaternary structure, homohexamer. Mg(2+) is required as a cofactor.

The protein resides in the cytoplasm. It carries out the reaction (R)-4'-phosphopantetheine + ATP + H(+) = 3'-dephospho-CoA + diphosphate. The protein operates within cofactor biosynthesis; coenzyme A biosynthesis; CoA from (R)-pantothenate: step 4/5. Functionally, reversibly transfers an adenylyl group from ATP to 4'-phosphopantetheine, yielding dephospho-CoA (dPCoA) and pyrophosphate. This chain is Phosphopantetheine adenylyltransferase, found in Rhodopseudomonas palustris (strain TIE-1).